We begin with the raw amino-acid sequence, 171 residues long: Ponticulin-like protein F (171 aa).

An N-terminal signal peptide occupies residues methionine 1–serine 20. Glycine 149 carries GPI-like-anchor amidated glycine lipidation. A propeptide spans threonine 150–leucine 171 (removed in mature form).

Belongs to the ponticulin family. In terms of processing, the GPI-like-anchor contains a phosphoceramide group, rather than a phosphatidyl group.

The protein localises to the cell membrane. The chain is Ponticulin-like protein F (ponF) from Dictyostelium discoideum (Social amoeba).